The chain runs to 47 residues: PhoP/PhoQ regulator MgrB (47 aa).

A helical transmembrane segment spans residues 6–26; it reads WLVLIVVVLACLVLWAQVINI.

The protein belongs to the MgrB family. May form homooligomers. Probably interacts with the periplasmic domain of PhoQ.

The protein localises to the cell inner membrane. In terms of biological role, phoP-regulated transcription is redox-sensitive, being activated when the periplasm becomes more reducing. MgrB acts between DsbA/DsbB and PhoP/PhoQ in this pathway. Represses PhoP/PhoQ signaling, possibly by binding to the periplasmic domain of PhoQ, altering its activity and that of downstream effector PhoP. The chain is PhoP/PhoQ regulator MgrB from Escherichia fergusonii (strain ATCC 35469 / DSM 13698 / CCUG 18766 / IAM 14443 / JCM 21226 / LMG 7866 / NBRC 102419 / NCTC 12128 / CDC 0568-73).